A 128-amino-acid polypeptide reads, in one-letter code: uncharacterized protein (128 aa).

3 helical membrane-spanning segments follow: residues 19–41 (MAIV…YVGS), 54–71 (LTFL…SIMQ), and 75–97 (PLIA…VDNL).

Its subcellular location is the cell membrane. This is an uncharacterized protein from Pasteurella multocida (strain Pm70).